The chain runs to 1381 residues: DNA-directed RNA polymerase subunit beta'' (1381 aa).

Zn(2+)-binding residues include C220, C293, C300, and C303.

It belongs to the RNA polymerase beta' chain family. RpoC2 subfamily. As to quaternary structure, in plastids the minimal PEP RNA polymerase catalytic core is composed of four subunits: alpha, beta, beta', and beta''. When a (nuclear-encoded) sigma factor is associated with the core the holoenzyme is formed, which can initiate transcription. It depends on Zn(2+) as a cofactor.

It is found in the plastid. The protein resides in the chloroplast. It carries out the reaction RNA(n) + a ribonucleoside 5'-triphosphate = RNA(n+1) + diphosphate. Its function is as follows. DNA-dependent RNA polymerase catalyzes the transcription of DNA into RNA using the four ribonucleoside triphosphates as substrates. The protein is DNA-directed RNA polymerase subunit beta'' of Draba nemorosa (Woodland whitlowgrass).